Consider the following 185-residue polypeptide: MISVTELRNGTKVQMDGGLWECLDYSHLKMGRGGAKVVTKFRNMESGSIVDRTFNSTEKLQDIYVEGKKMQYLYPDGDDYVFMDMETFDQVHLGKNIVSDAAKFMKENTEVEVAMYGDKALSISLPNQVILKITQTDPGVRGDTVSGGTKPATLETGAVVQVPLFVEQGTDVKVDTRTGQYLSRA.

This sequence belongs to the elongation factor P family.

It is found in the cytoplasm. The protein operates within protein biosynthesis; polypeptide chain elongation. Functionally, involved in peptide bond synthesis. Stimulates efficient translation and peptide-bond synthesis on native or reconstituted 70S ribosomes in vitro. Probably functions indirectly by altering the affinity of the ribosome for aminoacyl-tRNA, thus increasing their reactivity as acceptors for peptidyl transferase. This is Elongation factor P from Deinococcus radiodurans (strain ATCC 13939 / DSM 20539 / JCM 16871 / CCUG 27074 / LMG 4051 / NBRC 15346 / NCIMB 9279 / VKM B-1422 / R1).